The primary structure comprises 123 residues: RxLR effector protein Avh262 (123 aa).

Positions 1–18 (MLPVAVVLVVFAVAVTSA) are cleaved as a signal peptide. Residues 24–46 (VNPLPRRRRLKGTEEKGHHTNVN) are disordered. The RxLR-dEER signature appears at 30–50 (RRRLKGTEEKGHHTNVNDEER). Over residues 34-46 (KGTEEKGHHTNVN) the composition is skewed to basic and acidic residues. The interval 60–82 (LISKLKVKINAKLLAGDSAKPAT) is biP-binding.

This sequence belongs to the RxLR effector family. In terms of assembly, interacts with host plant ER-luminal binding immunoglobulin proteins (BiPs) such as soybean BiP1, BiP2, BiP3 and BiP4.

It localises to the secreted. The protein localises to the host endoplasmic reticulum. Functionally, effector that suppresses plant defense responses during the early stages of pathogen infection. Suppresses cell death induced by effectors and PAMPs in plant hosts. Avh262 stabilizes endoplasmic reticulum (ER)-luminal binding immunoglobulin proteins (BiPs), which act as negative regulators of plant resistance to Phytophthora. By stabilizing BiPs, Avh262 suppresses ER stress-triggered cell death and facilitates Phytophthora infection. This is RxLR effector protein Avh262 from Phytophthora sojae (Soybean stem and root rot agent).